We begin with the raw amino-acid sequence, 225 residues long: RNA-binding protein 24-A (225 aa).

In terms of domain architecture, RRM spans 11–88; sequence TKIFVGGLPY…RKANVNLAYL (78 aa).

It localises to the nucleus. It is found in the cytoplasm. In terms of biological role, multifunctional RNA-binding protein involved in the regulation of pre-mRNA splicing, mRNA stability and mRNA translation important for cell fate decision and differentiation. Plays a major role in pre-mRNA alternative splicing regulation. Mediates preferentially muscle-specific exon inclusion in numerous mRNAs important for striated cardiac and skeletal muscle cell differentiation. Binds to intronic splicing enhancer (ISE) composed of stretches of GU-rich motifs localized in flanking intron of exon that will be included by alternative splicing. Involved in embryonic stem cell (ESC) transition to cardiac cell differentiation by promoting pre-mRNA alternative splicing events of several pluripotency and/or differentiation genes. Plays a role in the regulation of mRNA stability and mRNA translation to which it is bound. Involved in myogenic differentiation by regulating myog levels. Binds to a huge amount of mRNAs. Required for embryonic heart development, sarcomer and M-band formation in striated muscles. The sequence is that of RNA-binding protein 24-A (rbm24-a) from Xenopus laevis (African clawed frog).